The sequence spans 468 residues: Nicotinamide phosphoribosyltransferase (468 aa).

Arg180 lines the diphosphate pocket. Beta-nicotinamide D-ribonucleotide is bound at residue Asp203. Diphosphate is bound by residues His229 and Arg293. At His229 the chain carries Phosphohistidine; by autocatalysis. Beta-nicotinamide D-ribonucleotide contacts are provided by Asp335 and Arg373.

The protein belongs to the NAPRTase family. As to quaternary structure, homodimer. The dimeric structure consists of two protomers arranged head to tail, with domain A on one protomer interacting with domain B on the other protomer. Post-translationally, phosphorylation at His-229 plays a crucial role in enhancing the substrate affinity and is important for maintaining enzymatic activity.

It catalyses the reaction beta-nicotinamide D-ribonucleotide + diphosphate = 5-phospho-alpha-D-ribose 1-diphosphate + nicotinamide + H(+). The protein operates within cofactor biosynthesis; NAD(+) biosynthesis; nicotinamide D-ribonucleotide from 5-phospho-alpha-D-ribose 1-diphosphate and nicotinamide: step 1/1. Its activity is regulated as follows. ATP-dependent autophosphorylation plays a vital role in nicotinamide binding and enzyme activation. Activity is inhibited by FK866. Functionally, catalyzes the condensation of nicotinamide with 5-phosphoribosyl-1-pyrophosphate to yield nicotinamide mononucleotide, an intermediate in the biosynthesis of NAD. Plays an important role in the biosynthesis of NAD via the nicotinamide (NAM) salvage pathway. Is also capable of hydrolyzing ATP and shows ATP-dependent autophosphorylation activity. In Xanthomonas campestris pv. campestris (strain 8004), this protein is Nicotinamide phosphoribosyltransferase.